The following is a 61-amino-acid chain: Large ribosomal subunit protein eL37 (61 aa).

Zn(2+)-binding residues include Cys19, Cys22, Cys34, and Cys37. Residues Cys19–Cys37 form a C4-type zinc finger.

It belongs to the eukaryotic ribosomal protein eL37 family. It depends on Zn(2+) as a cofactor.

Its function is as follows. Binds to the 23S rRNA. This Sulfolobus acidocaldarius (strain ATCC 33909 / DSM 639 / JCM 8929 / NBRC 15157 / NCIMB 11770) protein is Large ribosomal subunit protein eL37.